Consider the following 228-residue polypeptide: uncharacterized protein (228 aa).

Belongs to the HAD-like hydrolase superfamily.

It localises to the cytoplasm. Its subcellular location is the nucleus. This is an uncharacterized protein from Schizosaccharomyces pombe (strain 972 / ATCC 24843) (Fission yeast).